Reading from the N-terminus, the 197-residue chain is Ribonuclease HII (197 aa).

Positions 7 to 197 (LGIAGVDEVG…SFLRKLFATV (191 aa)) constitute an RNase H type-2 domain. The a divalent metal cation site is built by Asp13, Glu14, and Asp109.

This sequence belongs to the RNase HII family. Requires Mn(2+) as cofactor. The cofactor is Mg(2+).

The protein localises to the cytoplasm. The enzyme catalyses Endonucleolytic cleavage to 5'-phosphomonoester.. Its function is as follows. Endonuclease that specifically degrades the RNA of RNA-DNA hybrids. The polypeptide is Ribonuclease HII (Synechococcus sp. (strain CC9311)).